The sequence spans 547 residues: CTP synthase (547 aa).

Residues 1-265 (MARYIFITGG…DQAVLDAFDI (265 aa)) are amidoligase domain. Serine 13 lines the CTP pocket. Serine 13 lines the UTP pocket. Residues 14–19 (SLGKGL) and aspartate 71 each bind ATP. Mg(2+) contacts are provided by aspartate 71 and glutamate 139. CTP contacts are provided by residues 146–148 (DIE), 186–191 (KTKPTQ), and lysine 222. Residues 186-191 (KTKPTQ) and lysine 222 each bind UTP. Positions 291–546 (KVAIVGKYTQ…IRAAKENSRL (256 aa)) constitute a Glutamine amidotransferase type-1 domain. Glycine 353 is an L-glutamine binding site. Cysteine 380 (nucleophile; for glutamine hydrolysis) is an active-site residue. L-glutamine is bound by residues 381–384 (LGMQ), glutamate 404, and arginine 474. Active-site residues include histidine 519 and glutamate 521.

It belongs to the CTP synthase family. As to quaternary structure, homotetramer.

It catalyses the reaction UTP + L-glutamine + ATP + H2O = CTP + L-glutamate + ADP + phosphate + 2 H(+). The catalysed reaction is L-glutamine + H2O = L-glutamate + NH4(+). It carries out the reaction UTP + NH4(+) + ATP = CTP + ADP + phosphate + 2 H(+). Its pathway is pyrimidine metabolism; CTP biosynthesis via de novo pathway; CTP from UDP: step 2/2. Its activity is regulated as follows. Allosterically activated by GTP, when glutamine is the substrate; GTP has no effect on the reaction when ammonia is the substrate. The allosteric effector GTP functions by stabilizing the protein conformation that binds the tetrahedral intermediate(s) formed during glutamine hydrolysis. Inhibited by the product CTP, via allosteric rather than competitive inhibition. Functionally, catalyzes the ATP-dependent amination of UTP to CTP with either L-glutamine or ammonia as the source of nitrogen. Regulates intracellular CTP levels through interactions with the four ribonucleotide triphosphates. The polypeptide is CTP synthase (Roseobacter denitrificans (strain ATCC 33942 / OCh 114) (Erythrobacter sp. (strain OCh 114))).